The primary structure comprises 357 residues: MPSYLVETPQRCYSAIVERGIIGQTAQYLPPKTGKVFVVTTADVWKHAGAPLKAALAGIPFEILNLPGGEDQKRLAPVEALAEEMVQRGADRSSMVIAYGGGIVTDMGGFLAAIFMRGIPVLQIPTTLLAQVDAAIGGKTGVNLVSGKNLIGSFHQPLAVLTDPAILDSLPEREYRAGLWEIIKAGIIREVELFDYLSESRADVLARKPEAVDHIIAESVRMKAEVVSSDEREGDMRRILNFGHTFGHALEAETEYKRLLHGEAVAWGMRAAIYLGESTGYVSAEDSVDMLQMIEDYGPIPSLAGIRAENLLARLVHDKKTVQGKVHFVLPVRIGEVTVVSGIEEPLVFEAMRSALA.

NAD(+) contacts are provided by residues 126–127, K139, and K148; that span reads TT. Zn(2+) contacts are provided by E181, H244, and H261.

It belongs to the sugar phosphate cyclases superfamily. Dehydroquinate synthase family. Co(2+) serves as cofactor. It depends on Zn(2+) as a cofactor. Requires NAD(+) as cofactor.

It is found in the cytoplasm. It carries out the reaction 7-phospho-2-dehydro-3-deoxy-D-arabino-heptonate = 3-dehydroquinate + phosphate. It functions in the pathway metabolic intermediate biosynthesis; chorismate biosynthesis; chorismate from D-erythrose 4-phosphate and phosphoenolpyruvate: step 2/7. Functionally, catalyzes the conversion of 3-deoxy-D-arabino-heptulosonate 7-phosphate (DAHP) to dehydroquinate (DHQ). This is 3-dehydroquinate synthase from Solibacter usitatus (strain Ellin6076).